Here is a 478-residue protein sequence, read N- to C-terminus: Phosphatidylinositol 4-kinase type 2-alpha (478 aa).

Met1 carries the post-translational modification N-acetylmethionine. The interval 1 to 57 (MDETSPLVSPERAQPPEYTFPSVSGAHFPQVPGGAVRVAAAGSGPSPPCSPGHDRER) is disordered. A phosphoserine mark is found at Ser5, Ser9, Ser43, Ser46, and Ser50. A compositionally biased stretch (low complexity) spans 31–44 (VPGGAVRVAAAGSG). The PI3K/PI4K catalytic domain maps to 123-452 (SIYPERIYQG…VQMPPVIVET (330 aa)). The G-loop stretch occupies residues 129-135 (IYQGSSG). ATP is bound by residues 130–136 (YQGSSGS) and Lys151. Residues 156-158 (EPY) are important for substrate binding. Positions 164-177 (KWTKWLQKLCCPCC) are important for interaction with membranes. Residues Cys173, Cys174, Cys176, and Cys177 are each lipidated (S-palmitoyl cysteine). 260 to 263 (QLFV) contributes to the ATP binding site. The important for interaction with membranes stretch occupies residues 267-275 (KDADYWLRR). The tract at residues 304-312 (RNTDRGNDN) is catalytic loop. The interval 343–363 (AIDNGLAFPLKHPDSWRAYPF) is activation loop. Asp345 is a binding site for ATP. An important for interaction with membranes region spans residues 358–367 (WRAYPFYWAW). Ser461 is subject to Phosphoserine.

This sequence belongs to the PI3/PI4-kinase family. Type II PI4K subfamily. Associates with the BLOC-1 and the AP-3 complexes; the BLOC-1 complex is required for optimal binding of PI4K2A to the AP-3 complex. Interacts with BLOC1S5 and DTNBP1. Interacts with FOS; this interaction may enhance phosphatidylinositol phosphorylation activity. Interacts with ITCH. Interacts with ATG9A. Post-translationally, ubiquitinated by ITCH; this does not lead to proteasomal degradation. Palmitoylated. Palmitoylated by ZDHHC3 and ZDHHC7 in the CCPCC motif. Palmitoylation is cholesterol-dependent, and required for TGN localization. As to expression, detected in adult brain, especially in neurons in the cerebellum, brain cortex, dorsal root ganglion and spinal cord (at protein level).

The protein resides in the golgi apparatus. It is found in the trans-Golgi network membrane. It localises to the membrane raft. Its subcellular location is the endosome. The protein localises to the endosome membrane. The protein resides in the cytoplasmic vesicle. It is found in the cell projection. It localises to the dendrite. Its subcellular location is the presynaptic cell membrane. The protein localises to the synapse. The protein resides in the synaptosome. It is found in the mitochondrion. It localises to the membrane. Its subcellular location is the cell membrane. The protein localises to the perikaryon. The protein resides in the neuron projection. The enzyme catalyses a 1,2-diacyl-sn-glycero-3-phospho-(1D-myo-inositol) + ATP = a 1,2-diacyl-sn-glycero-3-phospho-(1D-myo-inositol 4-phosphate) + ADP + H(+). Functionally, membrane-bound phosphatidylinositol-4 kinase (PI4-kinase) that catalyzes the phosphorylation of phosphatidylinositol (PI) to phosphatidylinositol 4-phosphate (PI4P), a lipid that plays important roles in endocytosis, Golgi function, protein sorting and membrane trafficking and is required for prolonged survival of neurons. Besides, phosphorylation of phosphatidylinositol (PI) to phosphatidylinositol 4-phosphate (PI4P) is the first committed step in the generation of phosphatidylinositol 4,5-bisphosphate (PIP2), a precursor of the second messenger inositol 1,4,5-trisphosphate (InsP3). The chain is Phosphatidylinositol 4-kinase type 2-alpha (Pi4k2a) from Rattus norvegicus (Rat).